We begin with the raw amino-acid sequence, 66 residues long: Nigrocin-2ISb (66 aa).

The signal sequence occupies residues 1 to 22 (MFTLKKSMLLLFFLGTINLSLC). The propeptide at 23-43 (QEERDAEEERRDEDNAKMEEI) is removed in mature form. An intrachain disulfide couples C60 to C66.

Expressed by the skin glands.

The protein resides in the secreted. Its function is as follows. Has antimicrobial activity against Gram-negative bacterium E.coli ATCC 8739 (MIC=50 ug), against Gram positive bacteria S.aureus ATCC 6538 (MIC=3.1 ug), methicillin-resistant S.aureus ATCC 43300 (MIC=12.5 ug), B.subtilis ATCC 6633 (MIC=12.5 ug) and against fungus C.albicans ATCC 90028 (MIC=50 ug). This Odorrana ishikawae (Ishikawa's frog) protein is Nigrocin-2ISb.